The sequence spans 117 residues: Ribonuclease P protein component 4 (117 aa).

4 residues coordinate Zn(2+): C63, C66, C92, and C95.

This sequence belongs to the eukaryotic/archaeal RNase P protein component 4 family. As to quaternary structure, consists of a catalytic RNA component and at least 4 protein subunits. Forms a subcomplex with Rnp1 which stimulates the catalytic RNA. Zn(2+) serves as cofactor.

The protein localises to the cytoplasm. It carries out the reaction Endonucleolytic cleavage of RNA, removing 5'-extranucleotides from tRNA precursor.. In terms of biological role, part of ribonuclease P, a protein complex that generates mature tRNA molecules by cleaving their 5'-ends. The RNA is catalytic, but its KM for pre-tRNA is 170-fold decreased in the presence of the 4 known protein subunits (Rnp1-4). The protein subunits also decrease the amount of Mg(2+) needed for activity. The sequence is that of Ribonuclease P protein component 4 from Pyrococcus furiosus (strain ATCC 43587 / DSM 3638 / JCM 8422 / Vc1).